The chain runs to 91 residues: MTKELCMRCYISGRVQGVWFRASAKKLAEQLMISGWARNLADGRVEVFACGKEDKLEEFYTWLQKGPLNARVDVCTRENLPWEDYISFDVL.

Residues 6–91 (CMRCYISGRV…WEDYISFDVL (86 aa)) form the Acylphosphatase-like domain. Residues arginine 21 and asparagine 39 contribute to the active site.

It belongs to the acylphosphatase family.

The catalysed reaction is an acyl phosphate + H2O = a carboxylate + phosphate + H(+). This is Acylphosphatase (acyP) from Legionella pneumophila (strain Corby).